The primary structure comprises 517 residues: MQLNPAEISELIKSRIEGLTAGANIRNQGTVVSVTDGIVRIHGLSDVMQGEMLEFPADAEGQPSYGLALNLERDSVGAVILGAYEHISEGNTVKCTGRILEVPVGPELKGRVVNALGQPIDGKGPIDAKMTDVIEKVAPGVIARQSVSQPMQTGLKSIDSMVPVGRGQRELIIGDRQTGKTAVAIDAIINQKGQNMTCVYVAIGQKASSVKNVVRSLEQAGAMEYTIVVAATASESAAMQYVAAYSGCTMGEYFRDRGEDALIVYDDLSKQAVAYRQVSLLLRRPPGREAYPGDVFYLHSRLLERAARVNEKYVEDFTKGAVKGKTGSLTALPIIETQAGDVSAFVPTNVISITDGQIFLETSLFNAGIRPAINAGISVSRVGGAAQTKLIKNLSGGIRTDLAQYRELAAFAQFASDLDEATRKQLERGARVTELLKQAQYSPLPISLMGATLFAVNKGYLDDIAVNKLLSFEHGLHGYLKDKHAALLAKLEADKAMDKDAEAELNAATAAFKKSFA.

174–181 (GDRQTGKT) is a binding site for ATP.

Belongs to the ATPase alpha/beta chains family. F-type ATPases have 2 components, CF(1) - the catalytic core - and CF(0) - the membrane proton channel. CF(1) has five subunits: alpha(3), beta(3), gamma(1), delta(1), epsilon(1). CF(0) has three main subunits: a(1), b(2) and c(9-12). The alpha and beta chains form an alternating ring which encloses part of the gamma chain. CF(1) is attached to CF(0) by a central stalk formed by the gamma and epsilon chains, while a peripheral stalk is formed by the delta and b chains.

It localises to the cell inner membrane. It catalyses the reaction ATP + H2O + 4 H(+)(in) = ADP + phosphate + 5 H(+)(out). In terms of biological role, produces ATP from ADP in the presence of a proton gradient across the membrane. The alpha chain is a regulatory subunit. This Albidiferax ferrireducens (strain ATCC BAA-621 / DSM 15236 / T118) (Rhodoferax ferrireducens) protein is ATP synthase subunit alpha 1.